The following is a 225-amino-acid chain: uncharacterized protein (225 aa).

Residues 12 to 32 (AGFMMIFVFVIASFLLVLLFF) traverse the membrane as a helical segment.

The protein resides in the cell membrane. This is an uncharacterized protein from Bacillus subtilis (strain 168).